The chain runs to 429 residues: D-amino acid dehydrogenase (429 aa).

3 to 17 (VLILGSGVIGVTSAW) contacts FAD.

It belongs to the DadA oxidoreductase family. FAD is required as a cofactor.

The enzyme catalyses a D-alpha-amino acid + A + H2O = a 2-oxocarboxylate + AH2 + NH4(+). Oxidative deamination of D-amino acids. In Xanthomonas axonopodis pv. citri (strain 306), this protein is D-amino acid dehydrogenase.